A 180-amino-acid chain; its full sequence is Type IV major pilin protein PilE1 (180 aa).

Positions 1–7 are excised as a propeptide; that stretch reads MNTLQKG. Phe8 carries the N-methylphenylalanine modification. Residues 8–28 form a helical membrane-spanning segment; the sequence is FTLIELMIVIAIVGILAAVAL. The O-linked (GlcNAc...) serine glycan is linked to Ser70. Cys128 and Cys160 are joined by a disulfide.

It belongs to the N-Me-Phe pilin family. In terms of assembly, the pili are polar flexible filaments of about 5.4 nanometers diameter and 2.5 micrometers average length; they consist of only a single polypeptide chain arranged in a helical configuration of five subunits per turn in the assembled pilus.

The protein resides in the fimbrium. The protein localises to the membrane. Functionally, major component of the type IV pilus (T4P) that plays a role in cellular adherence, microcolony formation, resistance to neutrophil mediated killing, twitching motility as well as transformation. Mediates the attachment and the formation of bacterial microcolonies on host epithelial cells. Mechanistically, pili retractation induces host NF-kappa-B activation in infected cells, which is temporally associated with the formation of gonococcal microcolonies. This chain is Type IV major pilin protein PilE1 (pilE1), found in Neisseria gonorrhoeae.